Consider the following 235-residue polypeptide: Large ribosomal subunit protein uL1 (235 aa).

This sequence belongs to the universal ribosomal protein uL1 family. In terms of assembly, part of the 50S ribosomal subunit.

Binds directly to 23S rRNA. The L1 stalk is quite mobile in the ribosome, and is involved in E site tRNA release. In terms of biological role, protein L1 is also a translational repressor protein, it controls the translation of the L11 operon by binding to its mRNA. This is Large ribosomal subunit protein uL1 from Arthrobacter sp. (strain FB24).